Here is a 482-residue protein sequence, read N- to C-terminus: Scarecrow-like protein 3 (482 aa).

A GRAS domain is found at 45–479 (LKPEERGLYL…RPLYSVSAWR (435 aa)). The leucine repeat I (LRI) stretch occupies residues 52–115 (LYLIHLLLTC…ILKSWPGLYK (64 aa)). Positions 134-199 (RRLFFEMFPI…EGPPHLRITG (66 aa)) are VHIID. A VHIID motif is present at residues 165 to 169 (VHVID). The tract at residues 209 to 241 (QMAHRLIEEAEKLDIPFQFNPVVSRLDCLNVEQ) is leucine repeat II (LRII). Residues 250–401 (LAVSSVLQLH…KMLFGEEIKN (152 aa)) form a PFYRE region. Residues 302 to 324 (ENDMSNNNGYSPSGDSASSLPLP) are disordered. Residues 305–324 (MSNNNGYSPSGDSASSLPLP) are compositionally biased toward polar residues. The segment at 404–479 (SCEGFERRER…RPLYSVSAWR (76 aa)) is SAW.

Belongs to the GRAS family. In terms of assembly, binds to zinc finger proteins MGP/IDD3, IDD4, IDD5, BIB/IDD9 and JKD/IDD10. In terms of tissue distribution, expressed in seedlings, root epidermis, leaves, flowers and siliques.

The protein localises to the nucleus. In terms of biological role, probable transcription factor involved in plant development. This is Scarecrow-like protein 3 from Arabidopsis thaliana (Mouse-ear cress).